Here is a 795-residue protein sequence, read N- to C-terminus: Protein ROOT HAIR DEFECTIVE 3 homolog 1 (795 aa).

Topologically, residues 1 to 682 are cytoplasmic; sequence MDADKSEGCC…EANRRGNNWL (682 aa). Residues 39–254 enclose the GB1/RHD3-type G domain; the sequence is GLSYAVVSIM…IAPGGLAGDR (216 aa). Residue 49-56 participates in GTP binding; sequence GPQSSGKS. Residues 218 to 244 adopt a coiled-coil conformation; that stretch reads VALSSYEEKEEQFKEQIASLRQRFMHS. Residues 683–703 form a helical membrane-spanning segment; sequence PPPWAILALIVLGFNEFMTLL. Topologically, residues 704–706 are lumenal; sequence RNP. The chain crosses the membrane as a helical span at residues 707-727; sequence LYLGVMFVAFLLAKALWTQLD. Residues 728–795 lie on the Cytoplasmic side of the membrane; that stretch reads IPGEFRNGAL…PDHKSSSKED (68 aa). A disordered region spans residues 761 to 795; it reads QGEDPPAANPENRRSSNNTSSSENPPDHKSSSKED. The segment covering 775 to 784 has biased composition (low complexity); the sequence is SSNNTSSSEN. Positions 785-795 are enriched in basic and acidic residues; the sequence is PPDHKSSSKED.

It belongs to the TRAFAC class dynamin-like GTPase superfamily. GB1/RHD3 GTPase family. RHD3 subfamily. In terms of tissue distribution, specifically expressed in flowers.

The protein resides in the endoplasmic reticulum membrane. In terms of biological role, probable GTP-binding protein that may be involved in cell development. The sequence is that of Protein ROOT HAIR DEFECTIVE 3 homolog 1 from Arabidopsis thaliana (Mouse-ear cress).